The sequence spans 310 residues: Ribosomal RNA large subunit methyltransferase F (310 aa).

It belongs to the methyltransferase superfamily. METTL16/RlmF family.

The protein localises to the cytoplasm. It catalyses the reaction adenosine(1618) in 23S rRNA + S-adenosyl-L-methionine = N(6)-methyladenosine(1618) in 23S rRNA + S-adenosyl-L-homocysteine + H(+). In terms of biological role, specifically methylates the adenine in position 1618 of 23S rRNA. This Pseudoalteromonas translucida (strain TAC 125) protein is Ribosomal RNA large subunit methyltransferase F.